Reading from the N-terminus, the 452-residue chain is Mitochondrial distribution and morphology protein 10 (452 aa).

Residues proline 105–proline 130 form a disordered region.

Belongs to the MDM10 family. Component of the ER-mitochondria encounter structure (ERMES) or MDM complex, composed of MMM1, MDM10, MDM12 and MDM34. Associates with the mitochondrial outer membrane sorting assembly machinery SAM(core) complex.

The protein resides in the mitochondrion outer membrane. Its function is as follows. Component of the ERMES/MDM complex, which serves as a molecular tether to connect the endoplasmic reticulum and mitochondria. Components of this complex are involved in the control of mitochondrial shape and protein biogenesis and may function in phospholipid exchange. MDM10 is involved in the late assembly steps of the general translocase of the mitochondrial outer membrane (TOM complex). Functions in the TOM40-specific route of the assembly of outer membrane beta-barrel proteins, including the association of TOM40 with the receptor TOM22 and small TOM proteins. Can associate with the SAM(core) complex as well as the MDM12-MMM1 complex, both involved in late steps of the major beta-barrel assembly pathway, that is responsible for biogenesis of all outer membrane beta-barrel proteins. May act as a switch that shuttles between both complexes and channels precursor proteins into the TOM40-specific pathway. Plays a role in mitochondrial morphology and in the inheritance of mitochondria. This chain is Mitochondrial distribution and morphology protein 10, found in Uncinocarpus reesii (strain UAMH 1704).